A 564-amino-acid polypeptide reads, in one-letter code: Dihydroxy-acid dehydratase (564 aa).

C55 contacts [2Fe-2S] cluster. Position 87 (D87) interacts with Mg(2+). Residue C128 participates in [2Fe-2S] cluster binding. Residues D129 and K130 each coordinate Mg(2+). N6-carboxylysine is present on K130. Position 200 (C200) interacts with [2Fe-2S] cluster. E452 is a binding site for Mg(2+). S478 functions as the Proton acceptor in the catalytic mechanism.

This sequence belongs to the IlvD/Edd family. In terms of assembly, homodimer. It depends on [2Fe-2S] cluster as a cofactor. Requires Mg(2+) as cofactor.

The catalysed reaction is (2R)-2,3-dihydroxy-3-methylbutanoate = 3-methyl-2-oxobutanoate + H2O. The enzyme catalyses (2R,3R)-2,3-dihydroxy-3-methylpentanoate = (S)-3-methyl-2-oxopentanoate + H2O. It participates in amino-acid biosynthesis; L-isoleucine biosynthesis; L-isoleucine from 2-oxobutanoate: step 3/4. The protein operates within amino-acid biosynthesis; L-valine biosynthesis; L-valine from pyruvate: step 3/4. Functions in the biosynthesis of branched-chain amino acids. Catalyzes the dehydration of (2R,3R)-2,3-dihydroxy-3-methylpentanoate (2,3-dihydroxy-3-methylvalerate) into 2-oxo-3-methylpentanoate (2-oxo-3-methylvalerate) and of (2R)-2,3-dihydroxy-3-methylbutanoate (2,3-dihydroxyisovalerate) into 2-oxo-3-methylbutanoate (2-oxoisovalerate), the penultimate precursor to L-isoleucine and L-valine, respectively. This is Dihydroxy-acid dehydratase from Albidiferax ferrireducens (strain ATCC BAA-621 / DSM 15236 / T118) (Rhodoferax ferrireducens).